The chain runs to 156 residues: Zinc finger SWIM domain-containing protein 7 homolog (156 aa).

An SWIM-type zinc finger spans residues Tyr-82–Ile-120.

The protein belongs to the SWS1 family.

The protein localises to the nucleus. Functionally, may be involved in the homologous recombination repair (HRR) pathway of double-stranded DNA breaks arising during DNA replication or induced by DNA-damaging agents. The chain is Zinc finger SWIM domain-containing protein 7 homolog (zswim7) from Dictyostelium discoideum (Social amoeba).